A 225-amino-acid polypeptide reads, in one-letter code: UPF0758 protein NMC1174 (225 aa).

Residues 102–224 (VLSDPDTVAD…VRSFRQLGLM (123 aa)) form the MPN domain. Zn(2+) is bound by residues His-173, His-175, and Asp-186. Positions 173 to 186 (HNHPGGSPEPSQED) match the JAMM motif motif.

Belongs to the UPF0758 family.

This is UPF0758 protein NMC1174 from Neisseria meningitidis serogroup C / serotype 2a (strain ATCC 700532 / DSM 15464 / FAM18).